Consider the following 308-residue polypeptide: uncharacterized protein (308 aa).

The ABC transporter domain occupies 6 to 234; it reads LHIEGLDKKI…TEKAIIEVQP (229 aa). 38–45 lines the ATP pocket; it reads GPNGSGKT.

This sequence belongs to the ABC transporter superfamily.

This is an uncharacterized protein from Bacillus subtilis (strain 168).